A 477-amino-acid polypeptide reads, in one-letter code: Ankyrin repeat, SAM and basic leucine zipper domain-containing protein 1 (477 aa).

Phosphoserine occurs at positions 17, 18, and 20. 6 ANK repeats span residues 46 to 76 (EKKEKFKKALTTGDVSLVLELLDSGIISVDA), 80 to 109 (YGWTPLMYAASVANAELVRVLLDRGANASF), 112 to 146 (DKQTILITACSAHGSEEQILKCVELLLSRNADPNV), 150 to 179 (RLMTPIMYAARDGHTQVVALLVASGAEVNT), 183 to 212 (NGYTALTWAARQGHKSIVLKLLELGANKML), and 216 to 245 (DGKLPSEIAKRNKHHEIFNLLTFTLNPLEG). In terms of domain architecture, SAM spans 274–336 (SYAAFGDLEV…KILAALKELE (63 aa)).

In terms of assembly, interacts with DDX4, PIWIL1, RANBP9 and TDRD1.

The protein resides in the cytoplasm. In terms of biological role, plays a central role during spermatogenesis by repressing transposable elements and preventing their mobilization, which is essential for the germline integrity. Acts via the piRNA metabolic process, which mediates the repression of transposable elements during meiosis by forming complexes composed of piRNAs and Piwi proteins and governs the methylation and subsequent repression of transposons. Its association with pi-bodies suggests a participation in the primary piRNAs metabolic process. Required prior to the pachytene stage to facilitate the production of multiple types of piRNAs, including those associated with repeats involved in the regulation of retrotransposons. May act by mediating protein-protein interactions during germ cell maturation. This Callithrix jacchus (White-tufted-ear marmoset) protein is Ankyrin repeat, SAM and basic leucine zipper domain-containing protein 1 (ASZ1).